Here is an 803-residue protein sequence, read N- to C-terminus: MADMSVKQLADLVRTTPERLLEQLKEAGVAITHVDQTISDEEKRKLLLHLKTSHSTETDKKRSKIVLKRKKLSVVKSGKKSVNVEIRSKRTYTKPVVEQKRETEPAPTQEVPLTSDTTNLNEKAEVNVATLEKAVEAEVKEEAKKTPSEKKETPKKGPRKETRRSRKPDKEDKWEREELHMTKLVEERRRRHKPAHVPDSDSASAKLEQGFARPTAPVVREVALPESITVADLAQKMSVKAAEVIKAMMKLGAMVTINQRIDQETAAIVVEEMGHKPKLIKEDVLEENLVATLGEQIGEAVPRAPVVTIMGHVDHGKTSLLDYIRRTKVTSTEAGGITQHIGAYHVETELGMITFLDTPGHEAFTAMRARGAKCTDIVVLVVAADDGVMPQTVEAIQHARAAKVPVVVAVNKIDKPEADPERIKTELSTHDVLPEEWGGDTMFQPISAKTGEGIDALLERILLQAEVLELKAVDNGPARGMVVESRLDRGRGPVATVLVTSGELHLGDILLVGREYGRVRAMIGDDGRPCESAGPSMPVEVLGLSGTPVAGEEAIVVPDERKAREIARFRQGKYREVRLAKKQTAHLERIFDRMGEGKQNTLNIVLKADVQGSLEALTEALNKLSTDEVKVNIIASGVGGITESDVNLAIASDAVVIGFNVRADAPTRVLVEREGVDLRYYSIIYDLIDEVKKALSGLLAPEFEEKIVGLAEVRDVFRSSKIGAIAGCMVVEGVVRRHLPIRVLRDNVVIYEGQLESLRRYKEDVAEVRQGTECGIGVKNYNDVKVGDQIEVYEKTQVHRTIA.

Disordered regions lie at residues 95–125 (PVVEQKRETEPAPTQEVPLTSDTTNLNEKAE) and 138–209 (EVKE…KLEQ). A compositionally biased stretch (polar residues) spans 111–121 (VPLTSDTTNLN). The span at 138 to 155 (EVKEEAKKTPSEKKETPK) shows a compositional bias: basic and acidic residues. Residues 156–167 (KGPRKETRRSRK) show a composition bias toward basic residues. The span at 168-188 (PDKEDKWEREELHMTKLVEER) shows a compositional bias: basic and acidic residues. One can recognise a tr-type G domain in the interval 302–471 (PRAPVVTIMG…LLQAEVLELK (170 aa)). The G1 stretch occupies residues 311–318 (GHVDHGKT). 311 to 318 (GHVDHGKT) contributes to the GTP binding site. The tract at residues 336 to 340 (GITQH) is G2. Positions 357–360 (DTPG) are G3. Residues 357 to 361 (DTPGH) and 411 to 414 (NKID) contribute to the GTP site. A G4 region spans residues 411–414 (NKID). Residues 447–449 (SAK) are G5.

This sequence belongs to the TRAFAC class translation factor GTPase superfamily. Classic translation factor GTPase family. IF-2 subfamily.

It localises to the cytoplasm. One of the essential components for the initiation of protein synthesis. Protects formylmethionyl-tRNA from spontaneous hydrolysis and promotes its binding to the 30S ribosomal subunits. Also involved in the hydrolysis of GTP during the formation of the 70S ribosomal complex. The chain is Translation initiation factor IF-2 from Coxiella burnetii (strain CbuG_Q212) (Coxiella burnetii (strain Q212)).